Reading from the N-terminus, the 624-residue chain is PTS system mannitol-specific EIICBA component (624 aa).

Positions 13–336 (FGRFLSNMVM…SFVIASFFLK (324 aa)) constitute a PTS EIIC type-2 domain. 6 helical membrane passes run 25–46 (IGAF…WLPN), 51–71 (KLVG…SGGK), 135–156 (SSGI…PAVK), 166–186 (VDIL…EPAK), 274–293 (VIAG…AGLV), and 314–335 (VGVL…SFFL). The region spanning 372-463 (QKIFVACDAG…LVQDLSNTKV (92 aa)) is the PTS EIIB type-2 domain. The active-site Phosphocysteine intermediate; for EIIB activity is C378. Residue C378 is modified to Phosphocysteine; by EIIA. The region spanning 482 to 624 (FVLTEKQVFL…VEKVLALLKA (143 aa)) is the PTS EIIA type-2 domain. The Tele-phosphohistidine intermediate; for EIIA activity role is filled by H542. Position 542 is a phosphohistidine; by HPr (H542).

As to quaternary structure, homodimer. Post-translationally, an intramolecular phosphotransfer takes places between His-542 and Cys-378.

It is found in the cell inner membrane. It carries out the reaction D-mannitol(out) + N(pros)-phospho-L-histidyl-[protein] = D-mannitol 1-phosphate(in) + L-histidyl-[protein]. The phosphoenolpyruvate-dependent sugar phosphotransferase system (sugar PTS), a major carbohydrate active transport system, catalyzes the phosphorylation of incoming sugar substrates concomitantly with their translocation across the cell membrane. This system is involved in D-mannitol transport. The sequence is that of PTS system mannitol-specific EIICBA component (mtlA) from Pasteurella multocida (strain Pm70).